A 349-amino-acid chain; its full sequence is 5-deoxyribose 1-phosphate isomerase (349 aa).

Residues 49–51, Arg-92, and Gln-199 each bind substrate; that span reads RGA. Catalysis depends on Asp-240, which acts as the Proton donor. 250-251 is a substrate binding site; the sequence is NK.

Belongs to the EIF-2B alpha/beta/delta subunits family. DrdI subfamily.

It carries out the reaction 5-deoxy-alpha-D-ribose 1-phosphate = 5-deoxy-D-ribulose 1-phosphate. It participates in carbohydrate degradation. Its function is as follows. Catalyzes the isomerization of 5-deoxy-alpha-D-ribose 1-phosphate to 5-deoxy-D-ribulose 1-phosphate, as part of a 5-deoxyribose salvage pathway that recycles this toxic radical SAM enzyme by-product to mainstream metabolites. This chain is 5-deoxyribose 1-phosphate isomerase, found in Clostridium botulinum (strain Okra / Type B1).